The primary structure comprises 294 residues: 4-hydroxy-tetrahydrodipicolinate synthase (294 aa).

Pyruvate is bound at residue Thr47. Tyr135 functions as the Proton donor/acceptor in the catalytic mechanism. Lys163 functions as the Schiff-base intermediate with substrate in the catalytic mechanism. Ile205 provides a ligand contact to pyruvate.

This sequence belongs to the DapA family. As to quaternary structure, homotetramer; dimer of dimers.

The protein localises to the cytoplasm. It catalyses the reaction L-aspartate 4-semialdehyde + pyruvate = (2S,4S)-4-hydroxy-2,3,4,5-tetrahydrodipicolinate + H2O + H(+). The protein operates within amino-acid biosynthesis; L-lysine biosynthesis via DAP pathway; (S)-tetrahydrodipicolinate from L-aspartate: step 3/4. Catalyzes the condensation of (S)-aspartate-beta-semialdehyde [(S)-ASA] and pyruvate to 4-hydroxy-tetrahydrodipicolinate (HTPA). The polypeptide is 4-hydroxy-tetrahydrodipicolinate synthase (Rickettsia typhi (strain ATCC VR-144 / Wilmington)).